Consider the following 394-residue polypeptide: Putative transporter AraJ (394 aa).

Topologically, residues 1 to 4 (MKKV) are cytoplasmic. A helical membrane pass occupies residues 5–27 (ILSLALGTFGLGMAEFGIMGVLT). At 28 to 41 (ELAHNVGISIPAAG) the chain is on the periplasmic side. A helical membrane pass occupies residues 42-63 (HMISYYALGVVVGAPIIALFSS). Residues 64–69 (RYSLKH) are Cytoplasmic-facing. Residues 70–89 (ILLFLVALCVIGNAMFTLSS) traverse the membrane as a helical segment. Residues 90–93 (SYLM) lie on the Periplasmic side of the membrane. Residues 94–116 (LAIGRLVSGFPHGAFFGVGAIVL) traverse the membrane as a helical segment. The Cytoplasmic portion of the chain corresponds to 117-128 (SKIIKPGKVTAA). A helical membrane pass occupies residues 129-151 (VAGMVSGMTVANLLGIPLGTYLS). At 152–155 (QEFS) the chain is on the periplasmic side. Residues 156 to 178 (WRYTFLLIAVFNIAVMASVYFWV) form a helical membrane-spanning segment. Residues 179-198 (PDIRDEAKGNLREQFHFLRS) lie on the Cytoplasmic side of the membrane. A helical transmembrane segment spans residues 199-221 (PAPWLIFAATMFGNAGVFAWFSY). Residues 222–235 (VKPYMMFISGFSET) lie on the Periplasmic side of the membrane. Residues 236 to 255 (AMTFIMMLVGLGMVLGNMLS) traverse the membrane as a helical segment. The Cytoplasmic portion of the chain corresponds to 256-261 (GRISGR). The chain crosses the membrane as a helical span at residues 262-284 (YSPLRIAAVTDFIIVLALLMLFF). The Periplasmic portion of the chain corresponds to 285 to 293 (CGGMKTTSL). The chain crosses the membrane as a helical span at residues 294–316 (IFAFICCAGLFALSAPLQILLLQ). The Cytoplasmic portion of the chain corresponds to 317–322 (NAKGGE). Residues 323–342 (LLGAAGGQIAFNLGSAVGAY) form a helical membrane-spanning segment. Residues 343–351 (CGGMMLTLG) lie on the Periplasmic side of the membrane. The helical transmembrane segment at 352 to 374 (LAYNYVALPAALLSFAAMSSLLL) threads the bilayer. The Cytoplasmic segment spans residues 375–394 (YGRYKRQQAADTPVLAKPLG).

It belongs to the major facilitator superfamily.

The protein resides in the cell inner membrane. May be involved in either the transport or processing of arabinose polymers. The chain is Putative transporter AraJ (araJ) from Escherichia coli (strain K12).